We begin with the raw amino-acid sequence, 304 residues long: NADH-cytochrome b5 reductase 2 (304 aa).

The chain crosses the membrane as a helical span at residues 9–29 (MLVALAVIGVTVLLFLIKALG). An FAD-binding FR-type domain is found at 43–155 (NAKYPLPLIE…RGPNGLLVYK (113 aa)). Residues 135–150 (DSLKIGETIDFRGPNG) and 174–209 (VAKHVGMLAGGTGITPMLQLIRQITQDPNDNTKCSL) contribute to the FAD site.

Belongs to the flavoprotein pyridine nucleotide cytochrome reductase family. The cofactor is FAD.

It localises to the membrane. It catalyses the reaction 2 Fe(III)-[cytochrome b5] + NADH = 2 Fe(II)-[cytochrome b5] + NAD(+) + H(+). Functionally, NADH-cytochrome b5 reductases are involved in desaturation and elongation of fatty acids, cholesterol biosynthesis and drug metabolism. This chain is NADH-cytochrome b5 reductase 2 (cyb5r2), found in Xenopus tropicalis (Western clawed frog).